A 576-amino-acid polypeptide reads, in one-letter code: Aspartate--tRNA ligase, cytoplasmic 1 (576 aa).

Positions 1–78 (MSETTPVPVG…NWGELPMNQS (78 aa)) are disordered. Residues 20-43 (LKKEQKKLEKEKKIAEAKAKKAAE) show a composition bias toward basic and acidic residues. Position 302 (E302) interacts with L-aspartate. Positions 324–327 (QLYK) are aspartate. R346 contributes to the L-aspartate binding site. ATP-binding positions include 346–348 (RAE), 354–356 (RHL), and E499. The L-aspartate site is built by S502 and R506. 547-550 (GLER) lines the ATP pocket.

Belongs to the class-II aminoacyl-tRNA synthetase family. Type 2 subfamily.

The protein resides in the cytoplasm. It catalyses the reaction tRNA(Asp) + L-aspartate + ATP = L-aspartyl-tRNA(Asp) + AMP + diphosphate. In Dictyostelium discoideum (Social amoeba), this protein is Aspartate--tRNA ligase, cytoplasmic 1 (aspS1).